Consider the following 131-residue polypeptide: Small ribosomal subunit protein uS8 (131 aa).

Belongs to the universal ribosomal protein uS8 family. Part of the 30S ribosomal subunit. Contacts proteins S5 and S12.

Its function is as follows. One of the primary rRNA binding proteins, it binds directly to 16S rRNA central domain where it helps coordinate assembly of the platform of the 30S subunit. The chain is Small ribosomal subunit protein uS8 from Chlorobium phaeovibrioides (strain DSM 265 / 1930) (Prosthecochloris vibrioformis (strain DSM 265)).